Reading from the N-terminus, the 450-residue chain is Sorting nexin-4 (450 aa).

The residue at position 1 (M1) is an N-acetylmethionine. The tract at residues 1–53 (MEQAAPDPERLWQPAPLEPLSHPDAGLESMVGEETKGARDEGPGDGTMTENNF) is disordered. Basic and acidic residues predominate over residues 33-42 (EETKGARDEG). The PX domain occupies 61–187 (SVSEAEKRTG…YLFLTQEGNW (127 aa)). The a 1,2-diacyl-sn-glycero-3-phospho-(1D-myo-inositol-3-phosphate) site is built by R106, S108, K132, and R154.

The protein belongs to the sorting nexin family. In terms of assembly, heterodimer; heterodimerizes with SNX7 or SNX30. Interacts with WWC1/KIBRA. Identified in a complex with WWC1/KIBRA and dynein components DYNLL1 and DYNC1I2. Interacts with BIN1.

Its subcellular location is the early endosome. The protein resides in the early endosome membrane. Functionally, involved in the regulation of endocytosis and in several stages of intracellular trafficking. Plays a role in recycling endocytosed transferrin receptor and prevent its degradation. Involved in autophagosome assembly by regulating trafficking and recycling of phospholipid scramblase ATG9A. The chain is Sorting nexin-4 from Bos taurus (Bovine).